The primary structure comprises 409 residues: NADH-quinone oxidoreductase subunit D 1 (409 aa).

Belongs to the complex I 49 kDa subunit family. NDH-1 is composed of 14 different subunits. Subunits NuoB, C, D, E, F, and G constitute the peripheral sector of the complex.

It localises to the cell inner membrane. It carries out the reaction a quinone + NADH + 5 H(+)(in) = a quinol + NAD(+) + 4 H(+)(out). Functionally, NDH-1 shuttles electrons from NADH, via FMN and iron-sulfur (Fe-S) centers, to quinones in the respiratory chain. The immediate electron acceptor for the enzyme in this species is believed to be ubiquinone. Couples the redox reaction to proton translocation (for every two electrons transferred, four hydrogen ions are translocated across the cytoplasmic membrane), and thus conserves the redox energy in a proton gradient. The sequence is that of NADH-quinone oxidoreductase subunit D 1 from Solibacter usitatus (strain Ellin6076).